The chain runs to 520 residues: GMP synthase [glutamine-hydrolyzing] (520 aa).

Residues lysine 12–aspartate 205 form the Glutamine amidotransferase type-1 domain. Cysteine 89 (nucleophile) is an active-site residue. Residues histidine 179 and glutamate 181 contribute to the active site. One can recognise a GMPS ATP-PPase domain in the interval tryptophan 206–arginine 395. Serine 233 to serine 239 lines the ATP pocket.

Homodimer.

It catalyses the reaction XMP + L-glutamine + ATP + H2O = GMP + L-glutamate + AMP + diphosphate + 2 H(+). The protein operates within purine metabolism; GMP biosynthesis; GMP from XMP (L-Gln route): step 1/1. Catalyzes the synthesis of GMP from XMP. This chain is GMP synthase [glutamine-hydrolyzing], found in Streptococcus agalactiae serotype III (strain NEM316).